A 614-amino-acid chain; its full sequence is Methionine--tRNA ligase (614 aa).

The 'HIGH' region signature appears at 11–21 (PYTNGPRHIGH). Residues Cys143, Cys146, Cys156, and Cys159 each contribute to the Zn(2+) site. The 'KMSKS' region signature appears at 359-363 (QFSTS). Thr362 contacts ATP.

This sequence belongs to the class-I aminoacyl-tRNA synthetase family. MetG type 1 subfamily. In terms of assembly, monomer. Zn(2+) serves as cofactor.

Its subcellular location is the cytoplasm. The enzyme catalyses tRNA(Met) + L-methionine + ATP = L-methionyl-tRNA(Met) + AMP + diphosphate. Its function is as follows. Is required not only for elongation of protein synthesis but also for the initiation of all mRNA translation through initiator tRNA(fMet) aminoacylation. The protein is Methionine--tRNA ligase of Beutenbergia cavernae (strain ATCC BAA-8 / DSM 12333 / CCUG 43141 / JCM 11478 / NBRC 16432 / NCIMB 13614 / HKI 0122).